The primary structure comprises 201 residues: Peptidyl-tRNA hydrolase (201 aa).

A tRNA-binding site is contributed by tyrosine 14. Histidine 19 functions as the Proton acceptor in the catalytic mechanism. Residues tyrosine 64, asparagine 66, and asparagine 112 each contribute to the tRNA site.

This sequence belongs to the PTH family. As to quaternary structure, monomer.

The protein localises to the cytoplasm. The catalysed reaction is an N-acyl-L-alpha-aminoacyl-tRNA + H2O = an N-acyl-L-amino acid + a tRNA + H(+). In terms of biological role, hydrolyzes ribosome-free peptidyl-tRNAs (with 1 or more amino acids incorporated), which drop off the ribosome during protein synthesis, or as a result of ribosome stalling. Functionally, catalyzes the release of premature peptidyl moieties from peptidyl-tRNA molecules trapped in stalled 50S ribosomal subunits, and thus maintains levels of free tRNAs and 50S ribosomes. In Rhodopseudomonas palustris (strain BisB18), this protein is Peptidyl-tRNA hydrolase.